Here is a 366-residue protein sequence, read N- to C-terminus: Aminomethyltransferase (366 aa).

This sequence belongs to the GcvT family. As to quaternary structure, the glycine cleavage system is composed of four proteins: P, T, L and H.

The enzyme catalyses N(6)-[(R)-S(8)-aminomethyldihydrolipoyl]-L-lysyl-[protein] + (6S)-5,6,7,8-tetrahydrofolate = N(6)-[(R)-dihydrolipoyl]-L-lysyl-[protein] + (6R)-5,10-methylene-5,6,7,8-tetrahydrofolate + NH4(+). In terms of biological role, the glycine cleavage system catalyzes the degradation of glycine. The sequence is that of Aminomethyltransferase from Thermosynechococcus vestitus (strain NIES-2133 / IAM M-273 / BP-1).